Here is an 859-residue protein sequence, read N- to C-terminus: Rod cGMP-specific 3',5'-cyclic phosphodiesterase subunit alpha (859 aa).

G2 is modified (N-acetylglycine). GAF domains are found at residues 73-222 (QAEK…NLIM) and 254-431 (DIER…GWSV). The 334-residue stretch at 483–816 (EEEELAEILQ…KEWKALADEY (334 aa)) folds into the PDEase domain. H559 functions as the Proton donor in the catalytic mechanism. A divalent metal cation contacts are provided by H563, H599, D600, and D720. Positions 823–859 (LEEEKQKQQAAKQAASGNQPGGNPLQGAPASKSCCIQ) are disordered. C856 bears the Cysteine methyl ester mark. C856 carries the S-farnesyl cysteine lipid modification. Residues 857 to 859 (CIQ) constitute a propeptide, removed in mature form.

Belongs to the cyclic nucleotide phosphodiesterase family. In terms of assembly, oligomer composed of two catalytic chains (alpha and beta), an inhibitory chain (gamma) and the delta chain. Requires a divalent metal cation as cofactor.

Its subcellular location is the cell membrane. The protein localises to the cell projection. It localises to the cilium. It is found in the photoreceptor outer segment. The enzyme catalyses 3',5'-cyclic GMP + H2O = GMP + H(+). In terms of biological role, rod-specific cGMP phosphodiesterase that catalyzes the hydrolysis of 3',5'-cyclic GMP. This protein participates in processes of transmission and amplification of the visual signal. This is Rod cGMP-specific 3',5'-cyclic phosphodiesterase subunit alpha from Mus musculus (Mouse).